Reading from the N-terminus, the 1068-residue chain is Disheveled-associated activator of morphogenesis 2 (1068 aa).

The region spanning 40–416 (SPIPNAEELN…QIVLQDERGV (377 aa)) is the GBD/FH3 domain. Residues 434 to 516 (MLINENEVKQ…LVAQLSELST (83 aa)) are a coiled coil. Residues 514 to 586 (LSTGPVSSPP…MGLPLPQDPY (73 aa)) are disordered. The 77-residue stretch at 518 to 594 (PVSSPPPPGG…PYPSSDVPLR (77 aa)) folds into the FH1 domain. The segment covering 540-572 (LPPPPPPLPFACCPPPPPPPLPPGGPPTPPGAP) has biased composition (pro residues). Positions 595–994 (KKRVPQPSHP…EERRARMEAM (400 aa)) constitute an FH2 domain. S1015 is subject to Phosphoserine. Residues 1016–1048 (SLEEGGEFDDLVSALRSGEVFDKDLCKLKRSRK) enclose the DAD domain.

It belongs to the formin homology family. Interacts with DVL3. Interacts with INF2. In terms of tissue distribution, expressed in most tissues examined. Expressed in kidney glomeruli.

Functionally, key regulator of the Wnt signaling pathway, which is required for various processes during development, such as dorsal patterning, determination of left/right symmetry or myelination in the central nervous system. Acts downstream of Wnt ligands and upstream of beta-catenin (CTNNB1). Required for canonical Wnt signaling pathway during patterning in the dorsal spinal cord by promoting the aggregation of Disheveled (Dvl) complexes, thereby clustering and formation of Wnt receptor signalosomes and potentiating Wnt activity. During dorsal patterning of the spinal cord, inhibits oligodendrocytes differentiation via interaction with PIP5K1A. Also regulates non-canonical Wnt signaling pathway. Acts downstream of PITX2 in the developing gut and is required for left/right asymmetry within dorsal mesentery: affects mesenchymal condensation by lengthening cadherin-based junctions through WNT5A and non-canonical Wnt signaling, inducing polarized condensation in the left dorsal mesentery necessary to initiate gut rotation. Together with DAAM1, required for myocardial maturation and sarcomere assembly. Is a regulator of actin nucleation and elongation, filopodia formation and podocyte migration. The polypeptide is Disheveled-associated activator of morphogenesis 2 (Homo sapiens (Human)).